A 492-amino-acid chain; its full sequence is Dipeptide and tripeptide permease A (492 aa).

The Cytoplasmic segment spans residues 1–20; it reads MSTANKHPEAASLNAFKQPR. Residues 21-43 form a helical membrane-spanning segment; it reads SFYLIFSIELWERFGYYGLQGIM. Topologically, residues 44–58 are periplasmic; the sequence is AVYLVKMLGMSEAQS. The chain crosses the membrane as a helical span at residues 59–79; sequence ITLFASFSALVYGLIAVGGWL. At 80–88 the chain is on the cytoplasmic side; that stretch reads GDKVLGTKR. The chain crosses the membrane as a helical span at residues 89 to 109; that stretch reads VIVLGTLVLALGYALVAWSGH. Position 110 (Asp-110) is a topological domain, periplasmic. Residues 111–131 form a helical membrane-spanning segment; sequence IAMIYFGMATIAVGNGLFKAN. Topologically, residues 132 to 152 are cytoplasmic; it reads PSSLLSTCYEKDDPRLDGAFT. A helical membrane pass occupies residues 153-173; that stretch reads MYYMAINIGSFFSMLATPWLA. Residues 174–178 are Periplasmic-facing; that stretch reads AQFGW. The helical transmembrane segment at 179-199 threads the bilayer; the sequence is STAFGLSFVGMLITLVNFMFF. Residues 200 to 217 lie on the Cytoplasmic side of the membrane; that stretch reads RKWVKDHGSKPDFAPLNM. Residues 218–238 traverse the membrane as a helical segment; sequence GKLLVTLLGIAVMIAAATWLL. The Periplasmic segment spans residues 239-245; it reads HNQDIAR. The helical transmembrane segment at 246–266 threads the bilayer; that stretch reads MVLGAVAVAIVVIFTKEALTL. At 267 to 273 the chain is on the cytoplasmic side; the sequence is KGAARRK. Residues 274–294 form a helical membrane-spanning segment; sequence MIVAFLLMLEAIVFFVLYMQM. The Periplasmic segment spans residues 295 to 319; it reads PTSLNFFAIRNVEHSLLGIAFQPEQ. The helical transmembrane segment at 320-340 threads the bilayer; it reads FQALNPFWIMIFSPLLAALYN. Over 341–351 the chain is Cytoplasmic; that stretch reads KLGDRMPMPHK. The helical transmembrane segment at 352 to 372 threads the bilayer; it reads FALGMVLCSAAFLVLPLGASL. Residues 373–377 are Periplasmic-facing; that stretch reads ANKMG. The chain crosses the membrane as a helical span at residues 378–398; sequence IVSVGWLVLSYALQSVGELMI. The Cytoplasmic portion of the chain corresponds to 399-413; sequence SGLGLAMVAQLVPQR. A helical transmembrane segment spans residues 414 to 434; that stretch reads LMGFIMGSWFLTTAGAAMVAG. The Periplasmic segment spans residues 435-458; sequence KVANLMAVPENITNPLLSLHVYGD. A helical membrane pass occupies residues 459–479; it reads IFFKIGITTGVIAVLMILAAP. Topologically, residues 480 to 492 are cytoplasmic; that stretch reads LLNRMTQDEQPGV.

It belongs to the major facilitator superfamily. Proton-dependent oligopeptide transporter (POT/PTR) (TC 2.A.17) family. DtpA subfamily.

It localises to the cell inner membrane. Its function is as follows. Proton-dependent permease that transports di- and tripeptides. This is Dipeptide and tripeptide permease A from Erwinia pyrifoliae (strain DSM 12163 / CIP 106111 / Ep16/96).